Here is a 177-residue protein sequence, read N- to C-terminus: RNA polymerase sigma-E factor (177 aa).

The Polymerase core binding motif lies at 34–47; the sequence is DLLQTALARTYGRW. Positions 128-147 form a DNA-binding region, H-T-H motif; that stretch reads TEETAAALGMSAGTVKSTLH.

The protein belongs to the sigma-70 factor family. ECF subfamily.

Its subcellular location is the cytoplasm. Sigma factors are initiation factors that promote the attachment of RNA polymerase to specific initiation sites and are then released. This sigma factor is required for normal cell wall integrity; it is recruited by RNA polymerase to transcribe genes with cell wall-related functions. It is also involved in the transcription of the dagA gene coding for an extracellular agar-degrading enzyme. The polypeptide is RNA polymerase sigma-E factor (sigE) (Streptomyces coelicolor (strain ATCC BAA-471 / A3(2) / M145)).